Reading from the N-terminus, the 185-residue chain is Ribosome-recycling factor (185 aa).

It belongs to the RRF family.

Its subcellular location is the cytoplasm. In terms of biological role, responsible for the release of ribosomes from messenger RNA at the termination of protein biosynthesis. May increase the efficiency of translation by recycling ribosomes from one round of translation to another. This is Ribosome-recycling factor from Bacillus anthracis (strain CDC 684 / NRRL 3495).